The primary structure comprises 591 residues: 5'-nucleotidase domain-containing protein DDB_G0275467 (591 aa).

2 stretches are compositionally biased toward low complexity: residues 38–50 (STTT…SYST) and 68–78 (QHQQQQPQQHQ). The segment at 38–88 (STTTTSGIKSYSTHNRSNNDTHTSKSNTIDQHQQQQPQQHQNNDNKHLFTP) is disordered. D165 acts as the Nucleophile in catalysis. Positions 165 and 167 each coordinate Mg(2+). D167 serves as the catalytic Proton donor. A substrate-binding site is contributed by 305–313 (TAAVGKVHL). D450 contributes to the Mg(2+) binding site.

The protein belongs to the 5'(3')-deoxyribonucleotidase family. The cofactor is Mg(2+).

This chain is 5'-nucleotidase domain-containing protein DDB_G0275467, found in Dictyostelium discoideum (Social amoeba).